The chain runs to 650 residues: Zinc finger CCCH domain-containing protein 55 (650 aa).

The interval N67 to G162 is disordered. Over residues S105–N128 the composition is skewed to low complexity. A compositionally biased stretch (polar residues) spans P141 to H154. Residues P232 to Y254 form a C3H1-type zinc finger. The 77-residue stretch at R357–K433 folds into the RRM domain. Residues P566–Q650 are disordered. Over residues A581 to L590 the composition is skewed to basic and acidic residues.

The protein is Zinc finger CCCH domain-containing protein 55 of Arabidopsis thaliana (Mouse-ear cress).